Here is a 144-residue protein sequence, read N- to C-terminus: AP-4 complex subunit sigma-1 (144 aa).

Belongs to the adaptor complexes small subunit family. In terms of assembly, adaptor protein complex 4 (AP-4) is a heterotetramer composed of two large adaptins (epsilon-type subunit AP4E1 and beta-type subunit AP4B1), a medium adaptin (mu-type subunit AP4M1) and a small adaptin (sigma-type AP4S1). In terms of tissue distribution, widely expressed.

It localises to the golgi apparatus. The protein localises to the trans-Golgi network membrane. In terms of biological role, component of the adaptor protein complex 4 (AP-4). Adaptor protein complexes are vesicle coat components involved both in vesicle formation and cargo selection. They control the vesicular transport of proteins in different trafficking pathways. AP-4 forms a non clathrin-associated coat on vesicles departing the trans-Golgi network (TGN) and may be involved in the targeting of proteins from the trans-Golgi network (TGN) to the endosomal-lysosomal system. It is also involved in protein sorting to the basolateral membrane in epithelial cells and the proper asymmetric localization of somatodendritic proteins in neurons. AP-4 is involved in the recognition and binding of tyrosine-based sorting signals found in the cytoplasmic part of cargos, but may also recognize other types of sorting signal. The chain is AP-4 complex subunit sigma-1 from Homo sapiens (Human).